Reading from the N-terminus, the 281-residue chain is NADPH-dependent 7-cyano-7-deazaguanine reductase (281 aa).

88–90 provides a ligand contact to substrate; the sequence is IES. NADPH is bound at residue 90–91; sequence SK. Cys189 acts as the Thioimide intermediate in catalysis. Asp196 serves as the catalytic Proton donor. 228-229 contacts substrate; the sequence is HE. 257 to 258 is an NADPH binding site; that stretch reads RG.

It belongs to the GTP cyclohydrolase I family. QueF type 2 subfamily. In terms of assembly, homodimer.

The protein resides in the cytoplasm. The enzyme catalyses 7-aminomethyl-7-carbaguanine + 2 NADP(+) = 7-cyano-7-deazaguanine + 2 NADPH + 3 H(+). It functions in the pathway tRNA modification; tRNA-queuosine biosynthesis. Catalyzes the NADPH-dependent reduction of 7-cyano-7-deazaguanine (preQ0) to 7-aminomethyl-7-deazaguanine (preQ1). The polypeptide is NADPH-dependent 7-cyano-7-deazaguanine reductase (Yersinia pestis bv. Antiqua (strain Antiqua)).